The chain runs to 175 residues: NADH-ubiquinone oxidoreductase chain 6 (175 aa).

Transmembrane regions (helical) follow at residues 1-21 (MMTYIVFILSTVFVVSFVSFS), 25-45 (SPIYGGFGLIVAGGTGCGIVL), 47-67 (FGGSFLGLMVFLIYLGGMLVV), 88-108 (AVLAMFITGVLAELLTACYIL), and 149-169 (YGTWLVVVTGWSLLIGVLVIM).

The protein belongs to the complex I subunit 6 family. Core subunit of respiratory chain NADH dehydrogenase (Complex I) which is composed of 45 different subunits.

The protein localises to the mitochondrion inner membrane. It carries out the reaction a ubiquinone + NADH + 5 H(+)(in) = a ubiquinol + NAD(+) + 4 H(+)(out). Core subunit of the mitochondrial membrane respiratory chain NADH dehydrogenase (Complex I) which catalyzes electron transfer from NADH through the respiratory chain, using ubiquinone as an electron acceptor. Essential for the catalytic activity and assembly of complex I. The chain is NADH-ubiquinone oxidoreductase chain 6 (MT-ND6) from Felis catus (Cat).